The primary structure comprises 50 residues: Omega-conotoxin Bu8 (50 aa).

Residue A1 is a signal peptide. Positions 2 to 24 are excised as a propeptide; the sequence is EDSRGTQLHRALRKATKLSESTR. 3 disulfide bridges follow: C25-C40, C32-C44, and C39-C49. Residue C49 is modified to Cysteine amide.

The protein belongs to the conotoxin O1 superfamily. As to expression, expressed by the venom duct.

It localises to the secreted. Omega-conotoxins act at presynaptic membranes, they bind and block voltage-gated calcium channels (Cav). This toxin selectively and potently inhibits depolarization-activated rat Cav2.2/CACNA1B currents (IC(50)=89 nM), when coexpressed with alpha-2/delta-1 (CACNA2D1) and beta-3 (CACNB3) subunits. In vivo, is lethal to fish and displays potent analgesic activity in mice pain models of hot plate and acetic acid writhing but has fewer side effects on mouse motor function and lower toxicity in goldfish. Shows higher or similar analgesic activity in the pain models mentioned above compared to MVIIA, and lower side effects. In addition, it blocks Cav2.2/CACNA1B more rapidly than MVIIA and also dissociates more rapidly. This is Omega-conotoxin Bu8 from Conus bullatus (Bubble cone).